A 231-amino-acid polypeptide reads, in one-letter code: Casein kinase II subunit beta (231 aa).

This sequence belongs to the casein kinase 2 subunit beta family. As to quaternary structure, tetramer composed of two alpha chains, one beta chain and one beta' chain. In terms of processing, phosphorylated by alpha subunit.

In terms of biological role, regulatory subunit of casein kinase II/CK2. As part of the kinase complex regulates the basal catalytic activity of the alpha subunit a constitutively active serine/threonine-protein kinase that phosphorylates a large number of substrates containing acidic residues C-terminal to the phosphorylated serine or threonine. The polypeptide is Casein kinase II subunit beta (Schizosaccharomyces pombe (strain 972 / ATCC 24843) (Fission yeast)).